Consider the following 851-residue polypeptide: DNA mismatch repair protein MutS (851 aa).

Residue 602–609 participates in ATP binding; that stretch reads GPNMSGKS.

Belongs to the DNA mismatch repair MutS family.

Functionally, this protein is involved in the repair of mismatches in DNA. It is possible that it carries out the mismatch recognition step. This protein has a weak ATPase activity. The polypeptide is DNA mismatch repair protein MutS (Streptococcus pyogenes serotype M49 (strain NZ131)).